The sequence spans 363 residues: MQLPISQYNELLQKKLEKLTALLHPFNAPDIQVFDSPTSHYRMRAEFRIWHEQDDFYHIMFDQATLQRYRVDEFPIASMLINRMMQTLLPLLKQQEVLHKKLFQIDYLSTLSNKIIVSLLYHKTLTEEWESAAKNLKDLLEKQDFDVQIIGRASKQKICFEQDYVDEVLPVNGRNYVYRQVENSFTQPNATVNCKMLEWAIDCTQNSEGDLLELYCGNGNFSIALAQNFRKVLATEIAKPSVAAAQFNIAENKVDNLQIIRMSAEEFTQAMNGVRAFNRLKGIDLKSYECNTIFVDPPRAGLDPDTVKLVQNYDRILYISCNPHTLCDNLVELSKTHRIEKAALFDQFPYTDHMESGLWLIRK.

5 residues coordinate S-adenosyl-L-methionine: Q187, Y215, N220, E236, and D296. The Nucleophile role is filled by C321. E355 functions as the Proton acceptor in the catalytic mechanism.

Belongs to the class I-like SAM-binding methyltransferase superfamily. RNA M5U methyltransferase family. TrmA subfamily.

The enzyme catalyses uridine(54) in tRNA + S-adenosyl-L-methionine = 5-methyluridine(54) in tRNA + S-adenosyl-L-homocysteine + H(+). It carries out the reaction uridine(341) in tmRNA + S-adenosyl-L-methionine = 5-methyluridine(341) in tmRNA + S-adenosyl-L-homocysteine + H(+). Dual-specificity methyltransferase that catalyzes the formation of 5-methyluridine at position 54 (m5U54) in all tRNAs, and that of position 341 (m5U341) in tmRNA (transfer-mRNA). This chain is tRNA/tmRNA (uracil-C(5))-methyltransferase, found in Haemophilus influenzae (strain 86-028NP).